Consider the following 633-residue polypeptide: Sodium- and chloride-dependent glycine transporter 1 (633 aa).

Topologically, residues 1-30 (MGLCVNGAVPSEATKKDENLKRGNWGNQIE) are cytoplasmic. A run of 3 helical transmembrane segments spans residues 31–51 (FVLT…FPYL), 58–78 (GAFM…LFFM), and 113–133 (YIGI…FASM). Residues 134-208 (NRVLPWTYCN…ISEDIGDFGE (75 aa)) lie on the Extracellular side of the membrane. N-linked (GlcNAc...) asparagine glycans are attached at residues N158, N164, N173, and N179. Helical transmembrane passes span 209–229 (VQLP…LCLI), 238–258 (VVYF…IRGI), 283–303 (VWGD…GGLI), 330–350 (SVYA…HLGV), 373–393 (LLPI…LLGL), 429–449 (IIGF…WLLL), 453–473 (YAAS…VMYI), 493–513 (LFFQ…ILIF), and 533–553 (ITIG…YAIF). Residues 554-633 (KIWCSEGDTF…GQAHTQDSKV (80 aa)) are Cytoplasmic-facing. The segment at 588-633 (RYAQMSSTRSESNPEAQPLNPEKMKEDLSLTIQGSNGQAHTQDSKV) is disordered. Composition is skewed to polar residues over residues 591 to 602 (QMSSTRSESNPE) and 617 to 633 (LTIQ…DSKV).

The protein belongs to the sodium:neurotransmitter symporter (SNF) (TC 2.A.22) family. SLC6A9 subfamily. First expressed in early tailbud stage embryos in the midbrain and anterior spinal cord, and weakly in the hindbrain. By late tailbud stages, expression extends posteriorly in the spinal cord to appear in between somites. Expressed in the forebrain, retina, between the somites and in the blood islands by the swimming tadpole stages.

The protein localises to the cell membrane. It carries out the reaction glycine(out) + chloride(out) + 2 Na(+)(out) = glycine(in) + chloride(in) + 2 Na(+)(in). Its function is as follows. Sodium- and chloride-dependent glycine transporter which is essential for regulating glycine concentrations at inhibitory glycinergic synapses. The polypeptide is Sodium- and chloride-dependent glycine transporter 1 (Xenopus laevis (African clawed frog)).